A 431-amino-acid chain; its full sequence is Lipoyl synthase 2, mitochondrial (431 aa).

A disordered region spans residues 21–43 (SPLGKLQEERGEGVAKDPKKDKQ). Basic and acidic residues predominate over residues 26-40 (LQEERGEGVAKDPKK). [4Fe-4S] cluster contacts are provided by Cys127, Cys132, Cys138, Cys159, Cys163, Cys166, and Ser375. The Radical SAM core domain maps to 142-364 (DEEEGTATAT…EEEAMAMGFL (223 aa)).

The protein belongs to the radical SAM superfamily. Lipoyl synthase family. [4Fe-4S] cluster is required as a cofactor.

It localises to the mitochondrion. The enzyme catalyses [[Fe-S] cluster scaffold protein carrying a second [4Fe-4S](2+) cluster] + N(6)-octanoyl-L-lysyl-[protein] + 2 oxidized [2Fe-2S]-[ferredoxin] + 2 S-adenosyl-L-methionine + 4 H(+) = [[Fe-S] cluster scaffold protein] + N(6)-[(R)-dihydrolipoyl]-L-lysyl-[protein] + 4 Fe(3+) + 2 hydrogen sulfide + 2 5'-deoxyadenosine + 2 L-methionine + 2 reduced [2Fe-2S]-[ferredoxin]. It functions in the pathway protein modification; protein lipoylation via endogenous pathway; protein N(6)-(lipoyl)lysine from octanoyl-[acyl-carrier-protein]: step 2/2. In terms of biological role, catalyzes the radical-mediated insertion of two sulfur atoms into the C-6 and C-8 positions of the octanoyl moiety bound to the lipoyl domains of lipoate-dependent enzymes, thereby converting the octanoylated domains into lipoylated derivatives. This chain is Lipoyl synthase 2, mitochondrial, found in Trypanosoma cruzi (strain CL Brener).